Consider the following 252-residue polypeptide: Aspartate/glutamate leucyltransferase (252 aa).

The protein belongs to the R-transferase family. Bpt subfamily.

It is found in the cytoplasm. The enzyme catalyses N-terminal L-glutamyl-[protein] + L-leucyl-tRNA(Leu) = N-terminal L-leucyl-L-glutamyl-[protein] + tRNA(Leu) + H(+). It catalyses the reaction N-terminal L-aspartyl-[protein] + L-leucyl-tRNA(Leu) = N-terminal L-leucyl-L-aspartyl-[protein] + tRNA(Leu) + H(+). Functions in the N-end rule pathway of protein degradation where it conjugates Leu from its aminoacyl-tRNA to the N-termini of proteins containing an N-terminal aspartate or glutamate. The protein is Aspartate/glutamate leucyltransferase of Xanthomonas campestris pv. campestris (strain B100).